The sequence spans 736 residues: Na(+)/H(+) antiporter NhaA (736 aa).

The segment at 1–387 (MNHSPQSARP…ICGYLLLRAA (387 aa)) is na(+)/H(+) antiporter NhaA. The next 12 membrane-spanning stretches (helical) occupy residues 23–43 (AGGITLMAAAALALIVANSPF), 58–78 (LSLAHWINDALMAIFFLLVGL), 96–116 (MLPGIAAAGGVILPAIIFAVL), 126–146 (GWAVPSATDIAFALGVLSLLG), 155–175 (VFLATLAILDDLAAVVIIAIF), 178–198 (AEISMPYLGAAFITAAVLFVM), 201–221 (MGVVKLLPYLISAVILWFFVF), 224–244 (GVHATVAGVVAALMIPLKPAP), 265–285 (VAFIVVPIFGFANAGISFKGL), 298–318 (ILLGLFLGKQFGVFGAAWLAI), 334–354 (LYGVAILCGIGFTMSIFIGLL), and 367–387 (IGVLSGSALSAICGYLLLRAA). The segment at 388 to 736 (RPDQSAANPL…EKAIWARYGL (349 aa)) is peptidase S49.

It in the N-terminal section; belongs to the NhaA Na(+)/H(+) (TC 2.A.33) antiporter family. This sequence in the C-terminal section; belongs to the peptidase S49 family.

It is found in the cell inner membrane. It catalyses the reaction Na(+)(in) + 2 H(+)(out) = Na(+)(out) + 2 H(+)(in). Na(+)/H(+) antiporter that extrudes sodium in exchange for external protons. The protein is Na(+)/H(+) antiporter NhaA of Brucella abortus (strain 2308).